We begin with the raw amino-acid sequence, 132 residues long: Arginine decarboxylase proenzyme (132 aa).

Residue Ser70 is the Schiff-base intermediate with substrate; via pyruvic acid of the active site. Residue Ser70 is modified to Pyruvic acid (Ser); by autocatalysis. Catalysis depends on His75, which acts as the Proton acceptor; for processing activity. Residue Cys90 is the Proton donor; for catalytic activity of the active site.

It belongs to the prokaryotic AdoMetDC family. Type 1 subfamily. Heterooctamer of four alpha and four beta chains arranged as a tetramer of alpha/beta heterodimers. Pyruvate serves as cofactor. In terms of processing, is synthesized initially as an inactive proenzyme. Formation of the active enzyme involves a self-maturation process in which the active site pyruvoyl group is generated from an internal serine residue via an autocatalytic post-translational modification. Two non-identical subunits are generated from the proenzyme in this reaction, and the pyruvate is formed at the N-terminus of the alpha chain, which is derived from the carboxyl end of the proenzyme. The post-translation cleavage follows an unusual pathway, termed non-hydrolytic serinolysis, in which the side chain hydroxyl group of the serine supplies its oxygen atom to form the C-terminus of the beta chain, while the remainder of the serine residue undergoes an oxidative deamination to produce ammonia and the pyruvoyl group blocking the N-terminus of the alpha chain.

It carries out the reaction L-arginine + H(+) = agmatine + CO2. It participates in amine and polyamine biosynthesis; agmatine biosynthesis; agmatine from L-arginine: step 1/1. Its function is as follows. Specifically catalyzes the decarboxylation of L-arginine to agmatine. Has no S-adenosylmethionine decarboxylase (AdoMetDC) activity. The protein is Arginine decarboxylase proenzyme of Aeropyrum pernix (strain ATCC 700893 / DSM 11879 / JCM 9820 / NBRC 100138 / K1).